The chain runs to 258 residues: UPF0246 protein Asuc_0575 (258 aa).

Belongs to the UPF0246 family.

The sequence is that of UPF0246 protein Asuc_0575 from Actinobacillus succinogenes (strain ATCC 55618 / DSM 22257 / CCUG 43843 / 130Z).